Here is a 215-residue protein sequence, read N- to C-terminus: Cytochrome b6 (215 aa).

The chain crosses the membrane as a helical span at residues 32-52 (IFYCFGGITFTCFLVQVATGF). Cys-35 provides a ligand contact to heme c. The heme b site is built by His-86 and His-100. A run of 3 helical transmembrane segments spans residues 90–110 (ASMM…TGGF), 116–136 (LTWV…VTGY), and 186–206 (LHTF…FLMI). Residues His-187 and His-202 each contribute to the heme b site.

The protein belongs to the cytochrome b family. PetB subfamily. As to quaternary structure, the 4 large subunits of the cytochrome b6-f complex are cytochrome b6, subunit IV (17 kDa polypeptide, PetD), cytochrome f and the Rieske protein, while the 4 small subunits are PetG, PetL, PetM and PetN. The complex functions as a dimer. Requires heme b as cofactor. Heme c serves as cofactor.

The protein resides in the plastid. It localises to the chloroplast thylakoid membrane. In terms of biological role, component of the cytochrome b6-f complex, which mediates electron transfer between photosystem II (PSII) and photosystem I (PSI), cyclic electron flow around PSI, and state transitions. In Auxenochlorella protothecoides (Green microalga), this protein is Cytochrome b6.